The primary structure comprises 511 residues: AMP phosphorylase (511 aa).

AMP is bound by residues glycine 168, 194–199 (SRAITS), and threonine 203. Aspartate 256 functions as the Proton donor in the catalytic mechanism. 2 residues coordinate AMP: serine 262 and lysine 286.

It belongs to the thymidine/pyrimidine-nucleoside phosphorylase family. Type 2 subfamily.

The enzyme catalyses AMP + phosphate = alpha-D-ribose 1,5-bisphosphate + adenine. It carries out the reaction CMP + phosphate = cytosine + alpha-D-ribose 1,5-bisphosphate. It catalyses the reaction UMP + phosphate = alpha-D-ribose 1,5-bisphosphate + uracil. Its function is as follows. Catalyzes the conversion of AMP and phosphate to adenine and ribose 1,5-bisphosphate (R15P). Exhibits phosphorylase activity toward CMP and UMP in addition to AMP. Functions in an archaeal AMP degradation pathway, together with R15P isomerase and RubisCO. This Thermofilum pendens (strain DSM 2475 / Hrk 5) protein is AMP phosphorylase.